The sequence spans 576 residues: NADH-quinone oxidoreductase subunit C/D (576 aa).

The interval 1 to 176 (MAWISLEKAK…NLEGLFNYDR (176 aa)) is NADH dehydrogenase I subunit C. Positions 200–576 (SQIVLNWGPL…IDPVVGETDR (377 aa)) are NADH dehydrogenase I subunit D.

This sequence in the N-terminal section; belongs to the complex I 30 kDa subunit family. The protein in the C-terminal section; belongs to the complex I 49 kDa subunit family. In terms of assembly, NDH-1 is composed of 13 different subunits. Subunits NuoB, CD, E, F, and G constitute the peripheral sector of the complex.

It localises to the cell inner membrane. The enzyme catalyses a quinone + NADH + 5 H(+)(in) = a quinol + NAD(+) + 4 H(+)(out). In terms of biological role, NDH-1 shuttles electrons from NADH, via FMN and iron-sulfur (Fe-S) centers, to quinones in the respiratory chain. The immediate electron acceptor for the enzyme in this species is believed to be ubiquinone. Couples the redox reaction to proton translocation (for every two electrons transferred, four hydrogen ions are translocated across the cytoplasmic membrane), and thus conserves the redox energy in a proton gradient. The sequence is that of NADH-quinone oxidoreductase subunit C/D from Sulfurihydrogenibium sp. (strain YO3AOP1).